The chain runs to 372 residues: N-methyl-L-tryptophan oxidase (372 aa).

4 to 34 is an FAD binding site; sequence DLIIIGSGSVGAAAGYYATRAGLKVLMTDAH. Cys-307 bears the S-8alpha-FAD cysteine mark.

This sequence belongs to the MSOX/MTOX family. MTOX subfamily. Monomer. The cofactor is FAD.

The catalysed reaction is N(alpha)-methyl-L-tryptophan + O2 + H2O = L-tryptophan + formaldehyde + H2O2. Functionally, catalyzes the oxidative demethylation of N-methyl-L-tryptophan. This chain is N-methyl-L-tryptophan oxidase, found in Salmonella newport (strain SL254).